The sequence spans 443 residues: Serine/threonine-protein phosphatase 2A 55 kDa regulatory subunit B beta isoform (443 aa).

WD repeat units follow at residues 22–61 (TEAD…KNQV), 87–128 (EIEE…KRPE), 171–209 (AHTY…QSFN), and 220–260 (ELTE…LCDR). S275 carries the phosphoserine modification. WD repeat units lie at residues 279-317 (EIIS…RPIE), 334-375 (ENDC…DVTL), and 410-442 (DFSK…QDKV). Y295 is modified (phosphotyrosine). T298 is subject to Phosphothreonine.

It belongs to the phosphatase 2A regulatory subunit B family. PP2A consists of a common heterodimeric core enzyme, composed of a 36 kDa catalytic subunit (subunit C) and a 65 kDa constant regulatory subunit (PR65 or subunit A), that associates with a variety of regulatory subunits. Proteins that associate with the core dimer include three families of regulatory subunits B (the R2/B/PR55/B55, R3/B''/PR72/PR130/PR59 and R5/B'/B56 families), the 48 kDa variable regulatory subunit, viral proteins, and cell signaling molecules. Interacts with TOMM22. Interacts with IER5 (via N- and C-terminal regions).

Its subcellular location is the cytoplasm. The protein localises to the cytoskeleton. The protein resides in the membrane. In terms of biological role, the B regulatory subunit might modulate substrate selectivity and catalytic activity, and might also direct the localization of the catalytic enzyme to a particular subcellular compartment. The protein is Serine/threonine-protein phosphatase 2A 55 kDa regulatory subunit B beta isoform (PPP2R2B) of Bos taurus (Bovine).